A 263-amino-acid polypeptide reads, in one-letter code: Acyl-[acyl-carrier-protein]--UDP-N-acetylglucosamine O-acyltransferase (263 aa).

This sequence belongs to the transferase hexapeptide repeat family. LpxA subfamily. Homotrimer.

The protein resides in the cytoplasm. It catalyses the reaction a (3R)-hydroxyacyl-[ACP] + UDP-N-acetyl-alpha-D-glucosamine = a UDP-3-O-[(3R)-3-hydroxyacyl]-N-acetyl-alpha-D-glucosamine + holo-[ACP]. The protein operates within glycolipid biosynthesis; lipid IV(A) biosynthesis; lipid IV(A) from (3R)-3-hydroxytetradecanoyl-[acyl-carrier-protein] and UDP-N-acetyl-alpha-D-glucosamine: step 1/6. Functionally, involved in the biosynthesis of lipid A, a phosphorylated glycolipid that anchors the lipopolysaccharide to the outer membrane of the cell. The protein is Acyl-[acyl-carrier-protein]--UDP-N-acetylglucosamine O-acyltransferase of Tolumonas auensis (strain DSM 9187 / NBRC 110442 / TA 4).